The sequence spans 709 residues: Polyribonucleotide nucleotidyltransferase (709 aa).

Residues D487 and D493 each contribute to the Mg(2+) site. Positions 554–613 (PRIHTMKISSDKIKDVIGKGGAVIRALCEETGTTIEIEDDGTIKIAATEGAAAKEAIRRI) constitute a KH domain. The S1 motif domain maps to 623 to 691 (GKIYTGKVMR…RQGRIRLSIK (69 aa)).

This sequence belongs to the polyribonucleotide nucleotidyltransferase family. As to quaternary structure, component of the RNA degradosome, which is a multiprotein complex involved in RNA processing and mRNA degradation. Mg(2+) serves as cofactor.

It is found in the cytoplasm. It carries out the reaction RNA(n+1) + phosphate = RNA(n) + a ribonucleoside 5'-diphosphate. Functionally, involved in mRNA degradation. Catalyzes the phosphorolysis of single-stranded polyribonucleotides processively in the 3'- to 5'-direction. The sequence is that of Polyribonucleotide nucleotidyltransferase from Aliivibrio fischeri (strain ATCC 700601 / ES114) (Vibrio fischeri).